The chain runs to 624 residues: Bifunctional protein ArgH (624 aa).

The tract at residues 1–466 (MALWGGRFTQ…AARDTTLVKV (466 aa)) is argininosuccinate lyase. The N-acetyltransferase domain maps to 464 to 614 (VKVRPARITD…DEVALEFNLS (151 aa)). The probable acetyltransferase stretch occupies residues 467–624 (RPARITDIET…EQIISQVKVA (158 aa)).

This sequence in the N-terminal section; belongs to the lyase 1 family. Argininosuccinate lyase subfamily.

It localises to the cytoplasm. It catalyses the reaction 2-(N(omega)-L-arginino)succinate = fumarate + L-arginine. The protein operates within amino-acid biosynthesis; L-arginine biosynthesis; L-arginine from L-ornithine and carbamoyl phosphate: step 3/3. The polypeptide is Bifunctional protein ArgH (argH) (Vibrio vulnificus (strain CMCP6)).